A 125-amino-acid polypeptide reads, in one-letter code: Protein ApaG (125 aa).

The 125-residue stretch at 1–125 (MIEQPRICVQ…FRLAIPALIH (125 aa)) folds into the ApaG domain.

The polypeptide is Protein ApaG (Yersinia pseudotuberculosis serotype IB (strain PB1/+)).